We begin with the raw amino-acid sequence, 31 residues long: MSTYAIIKTGGKQVKVEVGQAIYVEKIIPEA.

The protein belongs to the bacterial ribosomal protein bL21 family. In terms of assembly, part of the 50S ribosomal subunit. Contacts protein L20.

Functionally, this protein binds to 23S rRNA in the presence of protein L20. The protein is Large ribosomal subunit protein bL21 (rplU) of Streptococcus thermophilus.